A 68-amino-acid chain; its full sequence is DNA gyrase inhibitor YacG (68 aa).

Zn(2+)-binding residues include Cys-12, Cys-15, Cys-30, and Cys-34. Positions Lys-48 to Asp-68 are disordered.

The protein belongs to the DNA gyrase inhibitor YacG family. Interacts with GyrB. The cofactor is Zn(2+).

Inhibits all the catalytic activities of DNA gyrase by preventing its interaction with DNA. Acts by binding directly to the C-terminal domain of GyrB, which probably disrupts DNA binding by the gyrase. The protein is DNA gyrase inhibitor YacG of Acinetobacter baylyi (strain ATCC 33305 / BD413 / ADP1).